Here is a 186-residue protein sequence, read N- to C-terminus: Ribosome-recycling factor (186 aa).

Belongs to the RRF family.

It localises to the cytoplasm. In terms of biological role, responsible for the release of ribosomes from messenger RNA at the termination of protein biosynthesis. May increase the efficiency of translation by recycling ribosomes from one round of translation to another. In Paraburkholderia xenovorans (strain LB400), this protein is Ribosome-recycling factor.